A 157-amino-acid polypeptide reads, in one-letter code: Crossover junction endodeoxyribonuclease RuvC (157 aa).

Catalysis depends on residues D7, E66, and D139. Residues D7, E66, and D139 each coordinate Mg(2+).

The protein belongs to the RuvC family. As to quaternary structure, homodimer which binds Holliday junction (HJ) DNA. The HJ becomes 2-fold symmetrical on binding to RuvC with unstacked arms; it has a different conformation from HJ DNA in complex with RuvA. In the full resolvosome a probable DNA-RuvA(4)-RuvB(12)-RuvC(2) complex forms which resolves the HJ. Requires Mg(2+) as cofactor.

The protein localises to the cytoplasm. It catalyses the reaction Endonucleolytic cleavage at a junction such as a reciprocal single-stranded crossover between two homologous DNA duplexes (Holliday junction).. Its function is as follows. The RuvA-RuvB-RuvC complex processes Holliday junction (HJ) DNA during genetic recombination and DNA repair. Endonuclease that resolves HJ intermediates. Cleaves cruciform DNA by making single-stranded nicks across the HJ at symmetrical positions within the homologous arms, yielding a 5'-phosphate and a 3'-hydroxyl group; requires a central core of homology in the junction. The consensus cleavage sequence is 5'-(A/T)TT(C/G)-3'. Cleavage occurs on the 3'-side of the TT dinucleotide at the point of strand exchange. HJ branch migration catalyzed by RuvA-RuvB allows RuvC to scan DNA until it finds its consensus sequence, where it cleaves and resolves the cruciform DNA. The sequence is that of Crossover junction endodeoxyribonuclease RuvC from Helicobacter acinonychis (strain Sheeba).